The sequence spans 176 residues: Disulfide bond formation protein B (176 aa).

Residues Met-1–Gln-11 are Cytoplasmic-facing. The chain crosses the membrane as a helical span at residues Val-12 to Phe-28. The Periplasmic portion of the chain corresponds to Leu-29 to Ile-46. Cys-38 and Cys-41 form a disulfide bridge. The helical transmembrane segment at Gly-47–Pro-63 threads the bilayer. Residues Lys-64 to Leu-70 are Cytoplasmic-facing. The chain crosses the membrane as a helical span at residues Leu-71 to Gly-88. Residues Arg-89–Glu-145 lie on the Periplasmic side of the membrane. Cysteines 104 and 131 form a disulfide. Residues Gln-146–Arg-164 traverse the membrane as a helical segment. Topologically, residues Ile-165–Arg-176 are cytoplasmic.

Belongs to the DsbB family.

The protein localises to the cell inner membrane. Its function is as follows. Required for disulfide bond formation in some periplasmic proteins. Acts by oxidizing the DsbA protein. The protein is Disulfide bond formation protein B of Psychrobacter arcticus (strain DSM 17307 / VKM B-2377 / 273-4).